The sequence spans 371 residues: Anhydro-N-acetylmuramic acid kinase (371 aa).

12–20 (GTVLDGNID) is a binding site for ATP.

The protein belongs to the anhydro-N-acetylmuramic acid kinase family.

The enzyme catalyses 1,6-anhydro-N-acetyl-beta-muramate + ATP + H2O = N-acetyl-D-muramate 6-phosphate + ADP + H(+). The protein operates within amino-sugar metabolism; 1,6-anhydro-N-acetylmuramate degradation. It functions in the pathway cell wall biogenesis; peptidoglycan recycling. Its function is as follows. Catalyzes the specific phosphorylation of 1,6-anhydro-N-acetylmuramic acid (anhMurNAc) with the simultaneous cleavage of the 1,6-anhydro ring, generating MurNAc-6-P. Is required for the utilization of anhMurNAc either imported from the medium or derived from its own cell wall murein, and thus plays a role in cell wall recycling. This is Anhydro-N-acetylmuramic acid kinase from Rhizobium rhizogenes (strain K84 / ATCC BAA-868) (Agrobacterium radiobacter).